The sequence spans 123 residues: Antitoxin RnlB (123 aa).

As to quaternary structure, can form a complex with cognate toxin RnlA. Post-translationally, probably degraded by CplXP and Lon proteases.

Its function is as follows. Antitoxin component of a type II toxin-antitoxin (TA) system. A labile antitoxin (half-life of 2.1 minutes) that inhibits the endonuclease activity of cognate toxin RnlA but not that of non-cognate toxin LsoA. The protein is Antitoxin RnlB (rnlB) of Escherichia coli (strain K12).